The sequence spans 232 residues: TIR domain-containing adapter molecule 2 (232 aa).

Residues 1 to 39 (MGVGKSKLDKCPLSWHKKDSVDADQDGHESDSKNSEEAC) are compositionally biased toward basic and acidic residues. A disordered region spans residues 1–70 (MGVGKSKLDK…EAKGAGPEEQ (70 aa)). G2 is lipidated: N-myristoyl glycine. The region spanning 74 to 226 (EFLKFVILHA…SIWKETRSVS (153 aa)) is the TIR domain. Y164 bears the Phosphotyrosine mark.

In terms of assembly, homodimer. Interacts with TLR4, TICAM1, IRF3 and IRF7 in response to LPS. Interacts with IL1R1, IL1RAP, IRAK2, IRAK3 and TRAF6. Interacts with protein kinase-inactive mutants of IRAK1 and IRAK4. Isoform 1 interacts with isoform 2; the interaction occurs in late endosomes and disrupts the interaction between isoform 1 and TICAM1. Interacts with MYD88; the interaction decreases after IL-18 stimulation in a time-dependent manner. Interacts with IL18R1 and IL18RAP. Interacts with TLR2. Interacts with RAB11FIP2. Myristoylated. Required for membrane association which is critical for its ability to initiate efficient signaling. In terms of processing, phosphorylated by PRKCE in response to LPS. Phosphorylation is essential for its function. It is depleted from the membrane upon phosphorylation. Tyrosine phosphorylation is inhibited by phosphatase PTPN4.

The protein resides in the cytoplasm. Its subcellular location is the golgi apparatus. It is found in the cell membrane. The protein localises to the early endosome. It localises to the late endosome. The protein resides in the endoplasmic reticulum. Its subcellular location is the cell projection. It is found in the phagocytic cup. Functionally, functions as a sorting adapter in different signaling pathways to facilitate downstream signaling leading to type I interferon induction. In TLR4 signaling, physically bridges TLR4 and TICAM1 and functionally transmits signal to TICAM1 in early endosomes after endocytosis of TLR4. In TLR2 signaling, physically bridges TLR2 and MYD88 and is required for the TLR2-dependent movement of MYD88 to endosomes following ligand engagement. Involved in IL-18 signaling and is proposed to function as a sorting adapter for MYD88 in IL-18 signaling during adaptive immune response. Forms a complex with RAB11FIP2 that is recruited to the phagosomes to promote the activation of the actin-regulatory GTPases RAC1 and CDC42 and subsequent phagocytosis of Gram-negative bacteria. The sequence is that of TIR domain-containing adapter molecule 2 (Ticam2) from Mus musculus (Mouse).